Here is a 379-residue protein sequence, read N- to C-terminus: Chaperone protein DnaJ (379 aa).

Positions 5-69 (EFYDRLGVSK…QKRAAYDQYG (65 aa)) constitute a J domain. A CR-type zinc finger spans residues 135–217 (GAEKEVSYNR…CHGTGHEKKT (83 aa)). Zn(2+) is bound by residues Cys148, Cys151, Cys165, Cys168, Cys191, Cys194, Cys205, and Cys208. CXXCXGXG motif repeat units lie at residues 148 to 155 (CHTCSGSG), 165 to 172 (CQKCHGSG), 191 to 198 (CDVCQGSG), and 205 to 212 (CPTCHGTG).

It belongs to the DnaJ family. In terms of assembly, homodimer. The cofactor is Zn(2+).

The protein localises to the cytoplasm. Participates actively in the response to hyperosmotic and heat shock by preventing the aggregation of stress-denatured proteins and by disaggregating proteins, also in an autonomous, DnaK-independent fashion. Unfolded proteins bind initially to DnaJ; upon interaction with the DnaJ-bound protein, DnaK hydrolyzes its bound ATP, resulting in the formation of a stable complex. GrpE releases ADP from DnaK; ATP binding to DnaK triggers the release of the substrate protein, thus completing the reaction cycle. Several rounds of ATP-dependent interactions between DnaJ, DnaK and GrpE are required for fully efficient folding. Also involved, together with DnaK and GrpE, in the DNA replication of plasmids through activation of initiation proteins. In Streptococcus agalactiae serotype V (strain ATCC BAA-611 / 2603 V/R), this protein is Chaperone protein DnaJ.